Here is a 143-residue protein sequence, read N- to C-terminus: Nucleoside diphosphate kinase (143 aa).

Residues Lys-11, Phe-59, Arg-87, Thr-93, Arg-104, and Asn-114 each coordinate ATP. His-117 functions as the Pros-phosphohistidine intermediate in the catalytic mechanism.

The protein belongs to the NDK family. In terms of assembly, homotetramer. Requires Mg(2+) as cofactor.

It localises to the cytoplasm. The enzyme catalyses dZDP + ATP = dZTP + ADP. It carries out the reaction a 2'-deoxyribonucleoside 5'-diphosphate + ATP = a 2'-deoxyribonucleoside 5'-triphosphate + ADP. It catalyses the reaction a ribonucleoside 5'-diphosphate + ATP = a ribonucleoside 5'-triphosphate + ADP. It functions in the pathway purine metabolism. Major role in the synthesis of nucleoside triphosphates other than ATP. The ATP gamma phosphate is transferred to the NDP beta phosphate via a ping-pong mechanism, using a phosphorylated active-site intermediate. Its function is as follows. (Microbial infection) Catalyzes the phosphorylation of dZDP to dZTP, when the bacterium is infected by a phage that produces the substrate for the synthesis of dZTP (2- amino-2'-deoxyadenosine 5'-triphosphate), which is then used by the phage as a DNA polymerase substrate. The polypeptide is Nucleoside diphosphate kinase (Salmonella paratyphi C (strain RKS4594)).